Here is a 252-residue protein sequence, read N- to C-terminus: Phosphoglycolate phosphatase (252 aa).

The active-site Nucleophile is Asp-13. Mg(2+) is bound by residues Asp-13, Asp-15, and Asp-192.

It belongs to the HAD-like hydrolase superfamily. CbbY/CbbZ/Gph/YieH family. As to quaternary structure, monomer. Requires Mg(2+) as cofactor. The cofactor is chloride.

It catalyses the reaction 2-phosphoglycolate + H2O = glycolate + phosphate. It functions in the pathway organic acid metabolism; glycolate biosynthesis; glycolate from 2-phosphoglycolate: step 1/1. Functionally, specifically catalyzes the dephosphorylation of 2-phosphoglycolate. Is involved in the dissimilation of the intracellular 2-phosphoglycolate formed during the DNA repair of 3'-phosphoglycolate ends, a major class of DNA lesions induced by oxidative stress. This Shigella sonnei (strain Ss046) protein is Phosphoglycolate phosphatase.